The sequence spans 799 residues: MSELRTLPVLPLRDIVVFPHMVVPLFVGRDKSVRALEEVMRGDKQILLVTQKNSADDDPAPGDIFEVGVLATVLQLLKLPDGTVKVLVEGKARAAVVSFTDQESYYEAQIGEVSEDDGAGPEAEALSRAVVEQFENYVKLNKKVPPEALASIPQIAEPGKLADSIAAHLSVKIGDKQNLLEIFDVVKRLEKVFALMEGEISVLQVEKKIRSRVKRQMEKTQREYYLNEQMKAIQRELGDPDDARDELIDLEKRIKKTKLSKEARTKAESELKKLRNMSPMSAESTVVRNYLDWLLSIPWGKAKTKKIDLVESEGILDADHYGLEKVKERILEYLAVQARTNSLKGPILCLVGPPGVGKTSLGKSIAKATGREFVRMSLGGVRDEAEIRGHRRTYIGSMPGKVVQSMKKAKTTNAFVLLDEIDKMGSDYRGDPASALLEVLDPSQNSTFGDHYLEVDYDLSQVMFVTTANSLNMPQPLLDRMEIIRIPGYTEDEKLEIAKRHILPKLAKDHGLKPAEFIVPDKAIRDLIRYYTREAGVRSLERELGALARKTVRDLAREKVASITIDDERLAKYAGVKKYRYGETDEVDQVGIVTGLAWTEFGGDILTIEAVKMPGKGRMQITGNLKDVMKESIAAANSYVRSRALQFGIKPPVFEKTDVHIHVPDGATPKDGPSAGIAMALAMVSVLTGIPIRKDIAMTGEITLRGRVTAIGGLKEKLLAALRSGVKTVLIPQENEKDLADVPQTVKDGLEIIPVSTVDEVLKHALTGPLTPVEWNEAEEPITTSAKKDDGDSDAMLTH.

The Lon N-terminal domain occupies 7-200 (LPVLPLRDIV…KVFALMEGEI (194 aa)). 352-359 (GPPGVGKT) contacts ATP. Residues 587–768 (VDQVGIVTGL…DEVLKHALTG (182 aa)) form the Lon proteolytic domain. Catalysis depends on residues serine 674 and lysine 717. A disordered region spans residues 772 to 799 (PVEWNEAEEPITTSAKKDDGDSDAMLTH).

Belongs to the peptidase S16 family. Homohexamer. Organized in a ring with a central cavity.

It is found in the cytoplasm. It carries out the reaction Hydrolysis of proteins in presence of ATP.. Its function is as follows. ATP-dependent serine protease that mediates the selective degradation of mutant and abnormal proteins as well as certain short-lived regulatory proteins. Required for cellular homeostasis and for survival from DNA damage and developmental changes induced by stress. Degrades polypeptides processively to yield small peptide fragments that are 5 to 10 amino acids long. Binds to DNA in a double-stranded, site-specific manner. CcrM is an important target of the Lon protease pathway in C.crescentus. The chain is Lon protease from Caulobacter vibrioides (strain ATCC 19089 / CIP 103742 / CB 15) (Caulobacter crescentus).